A 218-amino-acid polypeptide reads, in one-letter code: MHEDFWQARWARDEIGFHQAQVNPYLSRHWPTLGLAPGSRVLVPLCGKSLDLAWLAGQGFAVLGVELAEKAVRDFFDEQRLIPQVDSQGVFRVYRVGSLEIRCGDFFALSAADVADCRGLYDRAALIALPTEMRERYAAHLSAILPSGCRGLLVCLDYDQTRMGGPPFAVDDHEVRRLLGTDWQVRLLEAPDVLRENWKFLQRGLDRLEERVYRLERR.

Positions 10, 45, 66, and 123 each coordinate S-adenosyl-L-methionine.

Belongs to the class I-like SAM-binding methyltransferase superfamily. TPMT family.

It is found in the cytoplasm. The enzyme catalyses S-adenosyl-L-methionine + a thiopurine = S-adenosyl-L-homocysteine + a thiopurine S-methylether.. The chain is Thiopurine S-methyltransferase from Azotobacter vinelandii (strain DJ / ATCC BAA-1303).